A 525-amino-acid polypeptide reads, in one-letter code: GMP synthase [glutamine-hydrolyzing] (525 aa).

The Glutamine amidotransferase type-1 domain maps to 8 to 207 (KILILDFGSQ…ALDICGCKAN (200 aa)). C85 (nucleophile) is an active-site residue. Catalysis depends on residues H181 and E183. A GMPS ATP-PPase domain is found at 208–400 (WKPSSIIEDA…LGLPYNMLYR (193 aa)). ATP is bound at residue 235-241 (SGGVDSS).

In terms of assembly, homodimer.

The enzyme catalyses XMP + L-glutamine + ATP + H2O = GMP + L-glutamate + AMP + diphosphate + 2 H(+). It participates in purine metabolism; GMP biosynthesis; GMP from XMP (L-Gln route): step 1/1. Catalyzes the synthesis of GMP from XMP. In Shewanella frigidimarina (strain NCIMB 400), this protein is GMP synthase [glutamine-hydrolyzing].